Reading from the N-terminus, the 370-residue chain is Aminomethyltransferase (370 aa).

This sequence belongs to the GcvT family. In terms of assembly, the glycine cleavage system is composed of four proteins: P, T, L and H.

The catalysed reaction is N(6)-[(R)-S(8)-aminomethyldihydrolipoyl]-L-lysyl-[protein] + (6S)-5,6,7,8-tetrahydrofolate = N(6)-[(R)-dihydrolipoyl]-L-lysyl-[protein] + (6R)-5,10-methylene-5,6,7,8-tetrahydrofolate + NH4(+). In terms of biological role, the glycine cleavage system catalyzes the degradation of glycine. The polypeptide is Aminomethyltransferase (Clostridium botulinum (strain Loch Maree / Type A3)).